The chain runs to 56 residues: Small ribosomal subunit protein uS14 (56 aa).

Zn(2+) contacts are provided by cysteine 21, cysteine 24, cysteine 39, and cysteine 42.

Belongs to the universal ribosomal protein uS14 family. Zn(2+) serves as cofactor.

This is Small ribosomal subunit protein uS14 (RPS29) from Eremothecium gossypii (strain ATCC 10895 / CBS 109.51 / FGSC 9923 / NRRL Y-1056) (Yeast).